A 172-amino-acid chain; its full sequence is NADH-quinone oxidoreductase subunit B (172 aa).

[4Fe-4S] cluster is bound by residues cysteine 46, cysteine 47, cysteine 111, and cysteine 141.

Belongs to the complex I 20 kDa subunit family. As to quaternary structure, NDH-1 is composed of 14 different subunits. Subunits NuoB, C, D, E, F, and G constitute the peripheral sector of the complex. It depends on [4Fe-4S] cluster as a cofactor.

Its subcellular location is the cell membrane. The catalysed reaction is a quinone + NADH + 5 H(+)(in) = a quinol + NAD(+) + 4 H(+)(out). Its function is as follows. NDH-1 shuttles electrons from NADH, via FMN and iron-sulfur (Fe-S) centers, to quinones in the respiratory chain. The immediate electron acceptor for the enzyme in this species is believed to be a menaquinone. Couples the redox reaction to proton translocation (for every two electrons transferred, four hydrogen ions are translocated across the cytoplasmic membrane), and thus conserves the redox energy in a proton gradient. This Bacillus anthracis (strain A0248) protein is NADH-quinone oxidoreductase subunit B.